Here is a 652-residue protein sequence, read N- to C-terminus: Meiotic sister-chromatid recombination protein 3 (652 aa).

Disordered regions lie at residues 123–151 (RTGT…SRTG), 304–406 (NNSK…SDQK), 470–576 (EQIQ…ESGA), and 594–652 (ATPV…INTK). The segment covering 125 to 141 (GTASSRGVGSRTGSMTG) has biased composition (polar residues). The segment covering 316-336 (VQKQGVQQQQEVQHQGISQVQ) has biased composition (low complexity). The span at 337-361 (NTEAKSVGRKSTMSKRMTLRDTPNA) shows a compositional bias: polar residues. Over residues 380–390 (TKRKSIFKSKK) the composition is skewed to basic residues. 2 stretches are compositionally biased toward polar residues: residues 506–517 (QFSQENSGNQPP) and 524–544 (QYSQ…NFDT). A compositionally biased stretch (low complexity) spans 545 to 569 (NASGHNINHNNNNHNNNNNTSSSSS). Positions 612–621 (SSPSIDNTPR) are enriched in polar residues. Basic residues predominate over residues 640–652 (RLFKSNKTHINTK).

It localises to the cell membrane. Functionally, may be involved in the control of meiotic sister-chromatid recombination. This Kluyveromyces lactis (strain ATCC 8585 / CBS 2359 / DSM 70799 / NBRC 1267 / NRRL Y-1140 / WM37) (Yeast) protein is Meiotic sister-chromatid recombination protein 3 (MSC3).